A 475-amino-acid polypeptide reads, in one-letter code: Ribulose bisphosphate carboxylase large chain (475 aa).

The propeptide occupies 1-2; sequence MS. Pro3 is modified (N-acetylproline). An N6,N6,N6-trimethyllysine modification is found at Lys14. Positions 123 and 173 each coordinate substrate. Lys175 (proton acceptor) is an active-site residue. Lys177 provides a ligand contact to substrate. The Mg(2+) site is built by Lys201, Asp203, and Glu204. Position 201 is an N6-carboxylysine (Lys201). The active-site Proton acceptor is the His294. Residues Arg295, His327, and Ser379 each coordinate substrate.

Belongs to the RuBisCO large chain family. Type I subfamily. In terms of assembly, heterohexadecamer of 8 large chains and 8 small chains; disulfide-linked. The disulfide link is formed within the large subunit homodimers. Mg(2+) serves as cofactor. The disulfide bond which can form in the large chain dimeric partners within the hexadecamer appears to be associated with oxidative stress and protein turnover.

Its subcellular location is the plastid. The protein localises to the chloroplast. It carries out the reaction 2 (2R)-3-phosphoglycerate + 2 H(+) = D-ribulose 1,5-bisphosphate + CO2 + H2O. The enzyme catalyses D-ribulose 1,5-bisphosphate + O2 = 2-phosphoglycolate + (2R)-3-phosphoglycerate + 2 H(+). Its function is as follows. RuBisCO catalyzes two reactions: the carboxylation of D-ribulose 1,5-bisphosphate, the primary event in carbon dioxide fixation, as well as the oxidative fragmentation of the pentose substrate in the photorespiration process. Both reactions occur simultaneously and in competition at the same active site. In Psilotum nudum (Whisk fern), this protein is Ribulose bisphosphate carboxylase large chain.